A 258-amino-acid polypeptide reads, in one-letter code: Imidazole glycerol phosphate synthase subunit HisF (258 aa).

Active-site residues include D11 and D130.

Belongs to the HisA/HisF family. As to quaternary structure, heterodimer of HisH and HisF.

The protein localises to the cytoplasm. It carries out the reaction 5-[(5-phospho-1-deoxy-D-ribulos-1-ylimino)methylamino]-1-(5-phospho-beta-D-ribosyl)imidazole-4-carboxamide + L-glutamine = D-erythro-1-(imidazol-4-yl)glycerol 3-phosphate + 5-amino-1-(5-phospho-beta-D-ribosyl)imidazole-4-carboxamide + L-glutamate + H(+). Its pathway is amino-acid biosynthesis; L-histidine biosynthesis; L-histidine from 5-phospho-alpha-D-ribose 1-diphosphate: step 5/9. In terms of biological role, IGPS catalyzes the conversion of PRFAR and glutamine to IGP, AICAR and glutamate. The HisF subunit catalyzes the cyclization activity that produces IGP and AICAR from PRFAR using the ammonia provided by the HisH subunit. This is Imidazole glycerol phosphate synthase subunit HisF from Sodalis glossinidius (strain morsitans).